Consider the following 219-residue polypeptide: Probable GTP-binding protein EngB (219 aa).

Residues 31 to 205 (VGVEIAFAGR…LAILNEWCHP (175 aa)) form the EngB-type G domain. Residues 39–46 (GRSNAGKS), 66–70 (GRTQL), 84–87 (DLPG), 151–154 (TKSD), and 184–186 (FSS) contribute to the GTP site. The Mg(2+) site is built by Ser-46 and Thr-68.

This sequence belongs to the TRAFAC class TrmE-Era-EngA-EngB-Septin-like GTPase superfamily. EngB GTPase family. Mg(2+) serves as cofactor.

Its function is as follows. Necessary for normal cell division and for the maintenance of normal septation. The protein is Probable GTP-binding protein EngB of Shewanella baltica (strain OS223).